A 1133-amino-acid polypeptide reads, in one-letter code: DNA repair protein rad8 (1133 aa).

2 disordered regions span residues Met1–Asn34 and Pro392–Val413. Ser18 bears the Phosphoserine mark. In terms of domain architecture, Helicase ATP-binding spans Pro516 to Glu705. An ATP-binding site is contributed by Asp529 to Thr536. Residues Asp656–His659 carry the DEGH box motif. The RING-type zinc finger occupies Cys877–Arg923. The region spanning Gln971 to Glu1125 is the Helicase C-terminal domain.

Belongs to the SNF2/RAD54 helicase family.

It is found in the cytoplasm. The protein localises to the nucleus. Functionally, probable helicase, member of the UBC2/RAD6 epistasis group. Functions with DNA repair protein rad18 in error-free postreplication DNA repair. Involved in the maintenance of wild-type rates of instability of simple repetitive sequences such as poly(GT) repeats. Plays a role in surviving topoisomerase-mediated DNA damage. The chain is DNA repair protein rad8 from Schizosaccharomyces pombe (strain 972 / ATCC 24843) (Fission yeast).